A 432-amino-acid polypeptide reads, in one-letter code: MVNTTIKTTKSQEVFAAAQNLMPGGVSSPVRAFKSVGGQPIVFDRVKGAYIWDVDGNQYIDYVGTWGPAICGHAHPEVIAALHEALEKGTSFGAPSTLENVLAEMVIDAVPSIEMVRFVNSGTEACMGVLRLMRAFTNRDKIIKFEGCYHGHADTFLVKAGSGVATLGLPDSPGVPKAATSTTLTAPYNDLESVKALFEENRDEIAGVILEPVVGNAGFIAPDAGFLEGLRELTHEYGALLVFDEVMTGFRIAYGGAQEKFGVTPDLTTLGKVIGGGLPVGAYGGRRDIMSMVAPAGPVYQAGTLSGNPLAMTAGIKTLELLQKPGTYDYLERITKKLADGLLQIAKETGHTACGGQISAMFGLFFTSGPVHNYEDAKKSDTAKFGRFHRGMLERGVYLAPSQFEAGFTSFAHTEEDIDQTLAIARDVMSSL.

The residue at position 272 (Lys272) is an N6-(pyridoxal phosphate)lysine.

The protein belongs to the class-III pyridoxal-phosphate-dependent aminotransferase family. HemL subfamily. As to quaternary structure, homodimer. The cofactor is pyridoxal 5'-phosphate.

It localises to the cytoplasm. It catalyses the reaction (S)-4-amino-5-oxopentanoate = 5-aminolevulinate. It functions in the pathway porphyrin-containing compound metabolism; protoporphyrin-IX biosynthesis; 5-aminolevulinate from L-glutamyl-tRNA(Glu): step 2/2. Its pathway is porphyrin-containing compound metabolism; chlorophyll biosynthesis. The protein is Glutamate-1-semialdehyde 2,1-aminomutase of Nostoc punctiforme (strain ATCC 29133 / PCC 73102).